The sequence spans 358 residues: UDP-N-acetylglucosamine--N-acetylmuramyl-(pentapeptide) pyrophosphoryl-undecaprenol N-acetylglucosamine transferase (358 aa).

UDP-N-acetyl-alpha-D-glucosamine-binding positions include 11–13 (TGG), Asn-124, Arg-164, Ser-195, and Gln-291.

This sequence belongs to the glycosyltransferase 28 family. MurG subfamily.

It localises to the cell inner membrane. The catalysed reaction is di-trans,octa-cis-undecaprenyl diphospho-N-acetyl-alpha-D-muramoyl-L-alanyl-D-glutamyl-meso-2,6-diaminopimeloyl-D-alanyl-D-alanine + UDP-N-acetyl-alpha-D-glucosamine = di-trans,octa-cis-undecaprenyl diphospho-[N-acetyl-alpha-D-glucosaminyl-(1-&gt;4)]-N-acetyl-alpha-D-muramoyl-L-alanyl-D-glutamyl-meso-2,6-diaminopimeloyl-D-alanyl-D-alanine + UDP + H(+). The protein operates within cell wall biogenesis; peptidoglycan biosynthesis. Cell wall formation. Catalyzes the transfer of a GlcNAc subunit on undecaprenyl-pyrophosphoryl-MurNAc-pentapeptide (lipid intermediate I) to form undecaprenyl-pyrophosphoryl-MurNAc-(pentapeptide)GlcNAc (lipid intermediate II). This Leptospira borgpetersenii serovar Hardjo-bovis (strain JB197) protein is UDP-N-acetylglucosamine--N-acetylmuramyl-(pentapeptide) pyrophosphoryl-undecaprenol N-acetylglucosamine transferase.